A 773-amino-acid polypeptide reads, in one-letter code: Polyribonucleotide nucleotidyltransferase (773 aa).

Mg(2+)-binding residues include Asp-490 and Asp-496. Residues 557–616 (PKIDTITIPVDKIKVVIGKGGEQIDKIIAETGVKIDIDDEGLCSIFSSDQAAIDRAKEII) form the KH domain. Residues 626-694 (GEIYDAKVVR…DKGRVDASMR (69 aa)) form the S1 motif domain. Over residues 700–721 (PEGYVEPERKPRERRENGDRRK) the composition is skewed to basic and acidic residues. The tract at residues 700-773 (PEGYVEPERK…FPELSTKKPE (74 aa)) is disordered. Over residues 739–748 (RNNQGNKVGN) the composition is skewed to low complexity. The span at 751 to 773 (FELRERKSHIDEEFPELSTKKPE) shows a compositional bias: basic and acidic residues.

This sequence belongs to the polyribonucleotide nucleotidyltransferase family. It depends on Mg(2+) as a cofactor.

The protein localises to the cytoplasm. The enzyme catalyses RNA(n+1) + phosphate = RNA(n) + a ribonucleoside 5'-diphosphate. In terms of biological role, involved in mRNA degradation. Catalyzes the phosphorolysis of single-stranded polyribonucleotides processively in the 3'- to 5'-direction. This chain is Polyribonucleotide nucleotidyltransferase, found in Lactococcus lactis subsp. lactis (strain IL1403) (Streptococcus lactis).